Here is a 325-residue protein sequence, read N- to C-terminus: Glyoxylate/hydroxypyruvate reductase B (325 aa).

Catalysis depends on residues arginine 237 and glutamate 266. Residue histidine 285 is the Proton donor of the active site.

The protein belongs to the D-isomer specific 2-hydroxyacid dehydrogenase family. GhrB subfamily. As to quaternary structure, homodimer.

Its subcellular location is the cytoplasm. The enzyme catalyses glycolate + NADP(+) = glyoxylate + NADPH + H(+). It catalyses the reaction (R)-glycerate + NAD(+) = 3-hydroxypyruvate + NADH + H(+). The catalysed reaction is (R)-glycerate + NADP(+) = 3-hydroxypyruvate + NADPH + H(+). In terms of biological role, catalyzes the NADPH-dependent reduction of glyoxylate and hydroxypyruvate into glycolate and glycerate, respectively. In Serratia proteamaculans (strain 568), this protein is Glyoxylate/hydroxypyruvate reductase B.